A 688-amino-acid polypeptide reads, in one-letter code: Lipase (688 aa).

The signal sequence occupies residues 1–35 (MKTRQNKYSIRKFSVGASSILIAALLFMGGGSAQA). The interval 31–309 (GSAQAAEQQQ…KSAKQKQYKN (279 aa)) is disordered. Residues 36–302 (AEQQQDKGTV…KNEDQTNKSA (267 aa)) constitute a propeptide, removed in mature form. A compositionally biased stretch (polar residues) spans 45–54 (VENSTTQSIG). Basic and acidic residues-rich tracts occupy residues 84–95 (ESLHNETPKNED) and 103–143 (SQND…KHAS). 2 stretches are compositionally biased toward polar residues: residues 144–175 (ENNQ…AQQE) and 184–211 (KQDT…QSTE). Residues 227–268 (KNDDDKVETFNLNSKEEPLKVDKQANPTTDKDKSSKNDKGSH) are compositionally biased toward basic and acidic residues. A compositionally biased stretch (polar residues) spans 274–289 (LESNAVATTNKQSKQQ). Ser-418 serves as the catalytic Nucleophile. Asp-609 functions as the Charge relay system in the catalytic mechanism. A Ca(2+)-binding site is contributed by Asp-647. His-648 acts as the Charge relay system in catalysis. Residues Asp-650, Asp-655, and Asp-658 each contribute to the Ca(2+) site.

It belongs to the AB hydrolase superfamily. Lipase family.

It is found in the secreted. The catalysed reaction is a triacylglycerol + H2O = a diacylglycerol + a fatty acid + H(+). This Staphylococcus epidermidis (strain ATCC 35984 / DSM 28319 / BCRC 17069 / CCUG 31568 / BM 3577 / RP62A) protein is Lipase (lip).